The sequence spans 206 residues: ATP-dependent Clp protease proteolytic subunit 2 (206 aa).

The Nucleophile role is filled by Ser-100. Residue His-125 is part of the active site.

It belongs to the peptidase S14 family. As to quaternary structure, fourteen ClpP subunits assemble into 2 heptameric rings which stack back to back to give a disk-like structure with a central cavity, resembling the structure of eukaryotic proteasomes.

Its subcellular location is the cytoplasm. The enzyme catalyses Hydrolysis of proteins to small peptides in the presence of ATP and magnesium. alpha-casein is the usual test substrate. In the absence of ATP, only oligopeptides shorter than five residues are hydrolyzed (such as succinyl-Leu-Tyr-|-NHMec, and Leu-Tyr-Leu-|-Tyr-Trp, in which cleavage of the -Tyr-|-Leu- and -Tyr-|-Trp bonds also occurs).. Cleaves peptides in various proteins in a process that requires ATP hydrolysis. Has a chymotrypsin-like activity. Plays a major role in the degradation of misfolded proteins. This chain is ATP-dependent Clp protease proteolytic subunit 2, found in Myxococcus xanthus.